Consider the following 99-residue polypeptide: Protein MOST-1 (99 aa).

As to quaternary structure, interacts with TSPO, IGHM and IGHD. Expressed in the heart, kidney, liver, pancreas, small intestine, ovary, testis, prostate and thymus. Expressed in all of the cancer cell lines tested.

The protein localises to the cytoplasm. It localises to the microsome membrane. The protein resides in the endoplasmic reticulum membrane. Its function is as follows. May be involved in cell survival, proliferation and progression of cancer cells. This chain is Protein MOST-1 (C8orf17), found in Homo sapiens (Human).